Here is a 136-residue protein sequence, read N- to C-terminus: Cancer/testis antigen 62 (136 aa).

The disordered stretch occupies residues 1-22; sequence MMHTTSYRRLSPPHLTDQPSAY.

As to expression, testis specific. Expressed in cancer cell lines.

The chain is Cancer/testis antigen 62 (CT62) from Homo sapiens (Human).